The primary structure comprises 462 residues: Probable peptidoglycan glycosyltransferase FtsW (462 aa).

A disordered region spans residues Met1–Lys28. Residues Met1 to Ser92 lie on the Cytoplasmic side of the membrane. The segment covering Ser13 to Gly27 has biased composition (basic residues). Residues Leu93 to Ile113 form a helical membrane-spanning segment. At Ala114–Tyr127 the chain is on the periplasmic side. The helical transmembrane segment at Ala128–Phe148 threads the bilayer. Residues Arg149–Tyr158 are Cytoplasmic-facing. Residues Ala159–Gly179 traverse the membrane as a helical segment. The Periplasmic segment spans residues Lys180–Gly192. A helical transmembrane segment spans residues Ile193 to Val215. The Cytoplasmic segment spans residues Arg216 to Ser223. The helical transmembrane segment at Phe224–Leu244 threads the bilayer. Residues Glu245–Asp247 lie on the Periplasmic side of the membrane. Residues Met248–Asn268 traverse the membrane as a helical segment. The Cytoplasmic portion of the chain corresponds to Gly269–Lys270. The helical transmembrane segment at Leu271 to Pro291 threads the bilayer. Residues Trp292–Asp349 are Periplasmic-facing. Residues Phe350 to Leu370 form a helical membrane-spanning segment. Residues Phe371–Lys398 are Cytoplasmic-facing. The helical transmembrane segment at Gly399–Leu419 threads the bilayer. Residues Pro420–Thr425 are Periplasmic-facing. A helical membrane pass occupies residues Leu426 to Leu446. Residues Leu447 to Val462 lie on the Cytoplasmic side of the membrane.

The protein belongs to the SEDS family. FtsW subfamily.

The protein resides in the cell inner membrane. The catalysed reaction is [GlcNAc-(1-&gt;4)-Mur2Ac(oyl-L-Ala-gamma-D-Glu-L-Lys-D-Ala-D-Ala)](n)-di-trans,octa-cis-undecaprenyl diphosphate + beta-D-GlcNAc-(1-&gt;4)-Mur2Ac(oyl-L-Ala-gamma-D-Glu-L-Lys-D-Ala-D-Ala)-di-trans,octa-cis-undecaprenyl diphosphate = [GlcNAc-(1-&gt;4)-Mur2Ac(oyl-L-Ala-gamma-D-Glu-L-Lys-D-Ala-D-Ala)](n+1)-di-trans,octa-cis-undecaprenyl diphosphate + di-trans,octa-cis-undecaprenyl diphosphate + H(+). It functions in the pathway cell wall biogenesis; peptidoglycan biosynthesis. Its function is as follows. Peptidoglycan polymerase that is essential for cell division. The polypeptide is Probable peptidoglycan glycosyltransferase FtsW (Burkholderia thailandensis (strain ATCC 700388 / DSM 13276 / CCUG 48851 / CIP 106301 / E264)).